We begin with the raw amino-acid sequence, 291 residues long: Small ribosomal subunit protein uS2 (291 aa).

The segment at 270–291 is disordered; that stretch reads NINEEANTEFEQALSDADEDKN.

Belongs to the universal ribosomal protein uS2 family.

The polypeptide is Small ribosomal subunit protein uS2 (Rickettsia bellii (strain OSU 85-389)).